We begin with the raw amino-acid sequence, 141 residues long: Large ribosomal subunit protein uL11c (141 aa).

Belongs to the universal ribosomal protein uL11 family. As to quaternary structure, part of the ribosomal stalk of the 50S ribosomal subunit. Interacts with L10 and the large rRNA to form the base of the stalk. L10 forms an elongated spine to which L12 dimers bind in a sequential fashion forming a multimeric L10(L12)X complex.

The protein localises to the plastid. It localises to the chloroplast. Its function is as follows. Forms part of the ribosomal stalk which helps the ribosome interact with GTP-bound translation factors. In Guillardia theta (Cryptophyte), this protein is Large ribosomal subunit protein uL11c.